Reading from the N-terminus, the 144-residue chain is MSEQIAAVRRMVEAYNTGKTDDVADYIHPEYMNPGTLEFTSLRGPELFAINVAWVKKTFSEEARLEEVGIEERADWVRARLVLYGRHVGEMVGMAPTGRLFSGEQIHLLHFVDGKIHHHRDWPDYQGTYRQLGEPWPETEHRRP.

The substrate site is built by Asn-51 and Gln-105.

It belongs to the polyketide cyclase DnrD family. Homotetramer.

The enzyme catalyses methyl aklanonate = aklaviketone. The protein operates within antibiotic biosynthesis; daunorubicin biosynthesis. It participates in antibiotic biosynthesis; carminomycin biosynthesis. Its pathway is antibiotic biosynthesis; rhodomycin biosynthesis. It functions in the pathway antibiotic biosynthesis; aclacinomycin biosynthesis. Its function is as follows. Involved in the biosynthesis of aklavinone which is an important precursor common to the formation of the clinically significant anthracyclines such as carminomycin, daunorubicin (daunomycin), rhodomycin, aclacinomycin T (aklavin) and aclacinomycin A (aclarubicin). These compounds are aromatic polyketide antibiotics that exhibit high cytotoxicity and are widely applied in the chemotherapy of a variety of cancers. Catalyzes the cyclization of aklanonic acid methyl ester to yield aklaviketone. It is also able to use nogalonic acid methyl ester as substrate, but produces exclusively auraviketone with C9-R stereochemistry. This chain is Aklanonic acid methyl ester cyclase AcmA (acma), found in Streptomyces galilaeus.